We begin with the raw amino-acid sequence, 274 residues long: Energy-coupling factor transporter ATP-binding protein EcfA (274 aa).

The ABC transporter domain maps to 2–235 (IRLENVSYNY…LSLRYLGLTP (234 aa)). 35 to 42 (GKNGSGKS) is an ATP binding site.

The protein belongs to the ABC transporter superfamily. Energy-coupling factor EcfA family. As to quaternary structure, forms a stable energy-coupling factor (ECF) transporter complex composed of 2 membrane-embedded substrate-binding proteins (S component), 2 ATP-binding proteins (A component) and 2 transmembrane proteins (T component).

It is found in the cell membrane. In terms of biological role, ATP-binding (A) component of a common energy-coupling factor (ECF) ABC-transporter complex. Unlike classic ABC transporters this ECF transporter provides the energy necessary to transport a number of different substrates. The chain is Energy-coupling factor transporter ATP-binding protein EcfA from Methanosarcina acetivorans (strain ATCC 35395 / DSM 2834 / JCM 12185 / C2A).